A 395-amino-acid chain; its full sequence is MSSPERKRKRVTSTKNPSVKKKKKISPVPTPIPSLPDDLLVSIFARVSRLYYPILSLVSKSFRSLLRSPELYETRSLLGRTESCLYLCLQEGNPDPNPLWFTLCMKPDRTLKNGKKKKKKKMSSGNLLIPIPVPNPPLEHWSGHASVGSDIYFFGGYMEENVRSSRVVILDCRSHTLREAPSLQMERSDPAASVIDGKIYVAGGVDGDDADSLYPIEVFDIKTQIWDHRPIPYWEKDWGALSRSAYVDGKFYLTIGMKVMAYDLEESRWDFAGYQMGQSWFWSCNCVIENVLYCYGDAFRWFDTKLRLWKVMKVKGLPKLSRNVDVKIADYGGKMAIFWDNPSPSASDTNKIIRCAVIALERPNSEEIWGTVEWHEAVLTVPVSYEFEHALAVTV.

Residues 1–25 (MSSPERKRKRVTSTKNPSVKKKKKI) show a composition bias toward basic residues. Residues 1 to 29 (MSSPERKRKRVTSTKNPSVKKKKKISPVP) are disordered. Residues 29-75 (PTPIPSLPDDLLVSIFARVSRLYYPILSLVSKSFRSLLRSPELYETR) enclose the F-box domain. 2 Kelch repeats span residues 150–197 (DIYF…VIDG) and 198–246 (KIYV…RSAY).

This is F-box/kelch-repeat protein At4g39570 from Arabidopsis thaliana (Mouse-ear cress).